The primary structure comprises 124 residues: Fluoride-specific ion channel FluC (124 aa).

Transmembrane regions (helical) follow at residues 4-24 (ILAIAVFGAVGCVARYLLAGG), 32-52 (AFPWGTLAVNVIGAFLIGLIM), 68-88 (GLTIGFLGGFTTFSTFSYETF), and 101-121 (LNVLASVALCLVGTWAGIMAA). Positions 75 and 78 each coordinate Na(+).

The protein belongs to the fluoride channel Fluc/FEX (TC 1.A.43) family.

It is found in the cell inner membrane. The enzyme catalyses fluoride(in) = fluoride(out). With respect to regulation, na(+) is not transported, but it plays an essential structural role and its presence is essential for fluoride channel function. Fluoride-specific ion channel. Important for reducing fluoride concentration in the cell, thus reducing its toxicity. The sequence is that of Fluoride-specific ion channel FluC from Geobacter sulfurreducens (strain ATCC 51573 / DSM 12127 / PCA).